We begin with the raw amino-acid sequence, 224 residues long: Cerebellin-2 (224 aa).

The N-terminal stretch at 1 to 51 (MQAPGRGPLGLRLMMPGRRGALREPGGCGSCLGVALALLLLLLPACCPVRA) is a signal peptide. 2 N-linked (GlcNAc...) asparagine glycosylation sites follow: Asn-53 and Asn-110. The C1q domain maps to 88 to 224 (SGSAKVAFSA…TFSGFLVFPL (137 aa)).

As to quaternary structure, homohexamer; disulfide-linked homotrimers. The trimers are assembled via the globular C1q domains. The trimers associate via N-terminal cysteine residues to form disulfide-linked hexamers. May form homooligomers or heterooligomers with CBLN1 and CBLN3 prior to secretion. Once secreted, does not interact with other CBLN family members. Interacts with GRID2, and more weakly with GRID1. Interacts with NRXN1 and NRXN2 long and short isoforms produced by alternative promoter usage. Weakly interacts with NRXN3 short isoform and not at all with NRXN3 long isoform.

It localises to the secreted. Its function is as follows. Acts as a synaptic organizer in specific subsets of neurons in the brain. Essential for long-term maintenance but not establishment of excitatory synapses. Functions as part of a trans-synaptic complex by binding to postsynaptic GRID1 and presynaptic neurexins. This interaction helps regulate the activity of NMDA and AMPA receptors at hippocampal synapses without affecting synapse formation. NRXN1B-CBLN2-GRID1 complex transduce presynaptic signals into postsynaptic NMDAR response. NRXN3B-CBLN2-GRID1 complex transduce presynaptic signals into postsynaptic AMPAR response. This chain is Cerebellin-2, found in Homo sapiens (Human).